Here is a 327-residue protein sequence, read N- to C-terminus: Methionyl-tRNA formyltransferase (327 aa).

117 to 120 (SLLP) is a (6S)-5,6,7,8-tetrahydrofolate binding site.

Belongs to the Fmt family.

The enzyme catalyses L-methionyl-tRNA(fMet) + (6R)-10-formyltetrahydrofolate = N-formyl-L-methionyl-tRNA(fMet) + (6S)-5,6,7,8-tetrahydrofolate + H(+). Functionally, attaches a formyl group to the free amino group of methionyl-tRNA(fMet). The formyl group appears to play a dual role in the initiator identity of N-formylmethionyl-tRNA by promoting its recognition by IF2 and preventing the misappropriation of this tRNA by the elongation apparatus. The polypeptide is Methionyl-tRNA formyltransferase (Delftia acidovorans (strain DSM 14801 / SPH-1)).